The following is a 644-amino-acid chain: Adhesion G-protein coupled receptor F2 (644 aa).

Residues 1–18 (MIPAHWLYCLMLLLPIES) form the signal peptide. Residues 19 to 386 (CRILCQASSK…ESPVLTYITY (368 aa)) lie on the Extracellular side of the membrane. 4 N-linked (GlcNAc...) asparagine glycosylation sites follow: N155, N219, N293, and N311. The region spanning 233–377 (SRGSLGKNFT…SILMSPNTLE (145 aa)) is the GAIN-B domain. Disulfide bonds link C329/C356 and C344/C358. A GPS region spans residues 329–377 (CVGWHSLESRWDWRACKTIQENSRQAVCRCRPNKLYTSFSILMSPNTLE). The helical transmembrane segment at 387–407 (IGLGISICSLIICLAIEVLVW) threads the bilayer. Residues 408-422 (SQVTKTEISYLRHLC) lie on the Cytoplasmic side of the membrane. The helical transmembrane segment at 423–443 (IANIAATLLMADAWFIVASFL) threads the bilayer. Topologically, residues 444–465 (SGPVLHHNGCVAATFFVHFFYL) are extracellular. The chain crosses the membrane as a helical span at residues 466–486 (SVFFWMLAKALLILYGILIVF). The Cytoplasmic portion of the chain corresponds to 487 to 493 (HTLPKSC). A helical transmembrane segment spans residues 494-514 (LVASLFSVGYGCPLVIAIITL). The Extracellular segment spans residues 515–541 (AVTEPGKGYLRPEACWLNWDMTKALLA). The chain crosses the membrane as a helical span at residues 542–562 (FVVPALAIVVVNLITVTMVII). Topologically, residues 563–585 (KTQRAAIGSSMFQEVRAIVRICK) are cytoplasmic. The helical transmembrane segment at 586 to 606 (NIAILTPLLGLTWGFGIATVI) threads the bilayer. Topologically, residues 607–610 (NGHS) are extracellular. A helical transmembrane segment spans residues 611-631 (LAFHIIFSLLNALQVSPDAAV).

This sequence belongs to the G-protein coupled receptor 2 family. Adhesion G-protein coupled receptor (ADGR) subfamily. In terms of tissue distribution, mainly expressed in skin and heart, and very weakly in lung and spleen. Detected in all epidermal layers of skin.

It localises to the membrane. In terms of biological role, orphan receptor. This is Adhesion G-protein coupled receptor F2 (Adgrf2) from Mus musculus (Mouse).